The sequence spans 283 residues: Diaminopimelate epimerase (283 aa).

Substrate is bound by residues asparagine 13 and asparagine 65. The active-site Proton donor is cysteine 74. Substrate-binding positions include 75 to 76, asparagine 196, and 214 to 215; these read GN and ER. Residue cysteine 223 is the Proton acceptor of the active site. 224-225 is a binding site for substrate; it reads GT.

Belongs to the diaminopimelate epimerase family. In terms of assembly, homodimer.

The protein resides in the cytoplasm. The enzyme catalyses (2S,6S)-2,6-diaminopimelate = meso-2,6-diaminopimelate. Its pathway is amino-acid biosynthesis; L-lysine biosynthesis via DAP pathway; DL-2,6-diaminopimelate from LL-2,6-diaminopimelate: step 1/1. Its function is as follows. Catalyzes the stereoinversion of LL-2,6-diaminopimelate (L,L-DAP) to meso-diaminopimelate (meso-DAP), a precursor of L-lysine and an essential component of the bacterial peptidoglycan. This chain is Diaminopimelate epimerase, found in Alkaliphilus metalliredigens (strain QYMF).